Reading from the N-terminus, the 434-residue chain is Eukaryotic translation initiation factor 3 subunit E (434 aa).

The 174-residue stretch at 219 to 392 (FFNHPKGRDL…GHVVMGTQPL (174 aa)) folds into the PCI domain.

This sequence belongs to the eIF-3 subunit E family. As to quaternary structure, component of the eukaryotic translation initiation factor 3 (eIF-3) complex. The eIF-3 complex interacts with pix. Interacts with mxt.

It localises to the cytoplasm. Its function is as follows. Component of the eukaryotic translation initiation factor 3 (eIF-3) complex, which is involved in protein synthesis of a specialized repertoire of mRNAs and, together with other initiation factors, stimulates binding of mRNA and methionyl-tRNAi to the 40S ribosome. The eIF-3 complex specifically targets and initiates translation of a subset of mRNAs involved in cell proliferation. In Drosophila persimilis (Fruit fly), this protein is Eukaryotic translation initiation factor 3 subunit E (eIF3-S6).